The sequence spans 108 residues: Urease subunit beta (108 aa).

Belongs to the urease beta subunit family. In terms of assembly, heterotrimer of UreA (gamma), UreB (beta) and UreC (alpha) subunits. Three heterotrimers associate to form the active enzyme.

The protein localises to the cytoplasm. The enzyme catalyses urea + 2 H2O + H(+) = hydrogencarbonate + 2 NH4(+). It functions in the pathway nitrogen metabolism; urea degradation; CO(2) and NH(3) from urea (urease route): step 1/1. This chain is Urease subunit beta, found in Trichormus variabilis (strain ATCC 29413 / PCC 7937) (Anabaena variabilis).